A 1035-amino-acid chain; its full sequence is Integrin alpha-9 (1035 aa).

Positions 1-29 (MGGPAAPRGAGRLRALLLALVVAGIPAGA) are cleaved as a signal peptide. Over 30–981 (YNLDPQRPVH…LEPRGYVVGW (952 aa)) the chain is Extracellular. FG-GAP repeat units lie at residues 35–96 (QRPV…PDRR), 111–174 (SCGK…AKGR), 182–232 (EYKK…NTYL), 233–289 (KLND…SGTL), 290–349 (IKIF…GALE), 351–408 (QLAL…GIVP), and 411–474 (SMKL…LPGS). 3 cysteine pairs are disulfide-bonded: C87–C97, C142–C162, and C179–C194. N225 is a glycosylation site (N-linked (GlcNAc...) asparagine). 12 residues coordinate Ca(2+): D312, N314, D316, D320, D373, D375, D377, D381, D435, D437, N439, and D443. N476 is a glycosylation site (N-linked (GlcNAc...) asparagine). Residues C482 and C491 are joined by a disulfide bond. The N-linked (GlcNAc...) asparagine glycan is linked to N493. A disulfide bridge connects residues C497 and C555. The N-linked (GlcNAc...) asparagine glycan is linked to N612. The cysteines at positions 620 and 625 are disulfide-linked. 4 N-linked (GlcNAc...) asparagine glycosylation sites follow: N654, N658, N672, and N676. A disulfide bond links C696 and C706. N-linked (GlcNAc...) asparagine glycans are attached at residues N807 and N854. 2 disulfides stabilise this stretch: C855/C891 and C898/C903. The N-linked (GlcNAc...) asparagine glycan is linked to N904. The helical transmembrane segment at 982 to 1002 (IIAISLLVGILIFLLLAVLLW) threads the bilayer. At 1003–1035 (KMGFFRRRYKEIIEAEKNRKENEDSWDWVQKNQ) the chain is on the cytoplasmic side. The GFFKR motif signature appears at 1005 to 1009 (GFFRR).

This sequence belongs to the integrin alpha chain family. In terms of assembly, heterodimer of an alpha and a beta subunit. Alpha-9 (ITGA9) associates with beta-1 (ITGB1). Integrin ITGA9:ITGB1 interacts with FBLN5 (via N-terminus). Integrin ITGA9:ITGB1 interacts with SPP1/OPN (via N-terminus). Integrin ITGA9:ITGB1 interacts with TNC/TNFN3 (via the 3rd Fibronectin type-III domain). Integrin ITGA9:ITGB1 interacts with SVEP1/polydom (via Sushi domain 21); thereby inhibits Ca(2+) intracellular signaling and as a result represses vasocontraction. In terms of tissue distribution, expressed in vascular smooth muscle cells (at protein level). Expressed in the airway epithelium (at protein level).

It is found in the membrane. Its function is as follows. Integrin alpha-9/beta-1 (ITGA9:ITGB1) is a receptor for VCAM1, cytotactin and osteopontin. It recognizes the sequence A-E-I-D-G-I-E-L in cytotactin. ITGA9:ITGB1 may play a crucial role in SVEP1/polydom-mediated myoblast cell adhesion. Integrin ITGA9:ITGB1 represses PRKCA-mediated L-type voltage-gated channel Ca(2+) influx and ROCK-mediated calcium sensitivity in vascular smooth muscle cells via its interaction with SVEP1, thereby inhibiting vasocontraction. This Homo sapiens (Human) protein is Integrin alpha-9 (ITGA9).